Reading from the N-terminus, the 135-residue chain is Small ribosomal subunit protein uS11 (135 aa).

Belongs to the universal ribosomal protein uS11 family. Part of the 30S ribosomal subunit. Interacts with proteins S7 and S18. Binds to IF-3.

Functionally, located on the platform of the 30S subunit, it bridges several disparate RNA helices of the 16S rRNA. Forms part of the Shine-Dalgarno cleft in the 70S ribosome. The chain is Small ribosomal subunit protein uS11 from Cutibacterium acnes (strain DSM 16379 / KPA171202) (Propionibacterium acnes).